Reading from the N-terminus, the 170-residue chain is Bifunctional protein PyrR (170 aa).

The short motif at 90 to 102 (LVLIDDVLMSGRT) is the PRPP-binding element.

This sequence belongs to the purine/pyrimidine phosphoribosyltransferase family. PyrR subfamily.

The enzyme catalyses UMP + diphosphate = 5-phospho-alpha-D-ribose 1-diphosphate + uracil. Regulates the transcription of the pyrimidine nucleotide (pyr) operon in response to exogenous pyrimidines. Its function is as follows. Also displays a weak uracil phosphoribosyltransferase activity which is not physiologically significant. In Pseudomonas syringae pv. tomato (strain ATCC BAA-871 / DC3000), this protein is Bifunctional protein PyrR.